Reading from the N-terminus, the 117-residue chain is MNKDESRQRRARQTRIRIAEAQANRLTVIRSNTHISAQVYSPCGTKVVAAASTMEKDLRQAIKNGGNAQAAAQIGKLVAERAVKAGVVDVAFDRSGHRYHGRIKALAEAAREAGLKF.

Belongs to the universal ribosomal protein uL18 family. Part of the 50S ribosomal subunit; part of the 5S rRNA/L5/L18/L25 subcomplex. Contacts the 5S and 23S rRNAs.

Functionally, this is one of the proteins that bind and probably mediate the attachment of the 5S RNA into the large ribosomal subunit, where it forms part of the central protuberance. This chain is Large ribosomal subunit protein uL18, found in Polynucleobacter asymbioticus (strain DSM 18221 / CIP 109841 / QLW-P1DMWA-1) (Polynucleobacter necessarius subsp. asymbioticus).